An 86-amino-acid polypeptide reads, in one-letter code: MAHQAHSYHMVDPSPWPIFGAAAALLTTSGLVMWFHYNSSILLAAGLLSMLLVMLQWWREIVRESTFQGHHTPTVQKGLRYGMILF.

The Mitochondrial matrix portion of the chain corresponds to 1–15 (MAHQAHSYHMVDPSP). The helical transmembrane segment at 16-34 (WPIFGAAAALLTTSGLVMW) threads the bilayer. The Mitochondrial intermembrane portion of the chain corresponds to 35 to 40 (FHYNSS). The chain crosses the membrane as a helical span at residues 41-66 (ILLAAGLLSMLLVMLQWWREIVREST). At 67-86 (FQGHHTPTVQKGLRYGMILF) the chain is on the mitochondrial matrix side.

It belongs to the cytochrome c oxidase subunit 3 family. Component of the cytochrome c oxidase (complex IV, CIV), a multisubunit enzyme composed of 14 subunits. The complex is composed of a catalytic core of 3 subunits MT-CO1, MT-CO2 and MT-CO3, encoded in the mitochondrial DNA, and 11 supernumerary subunits COX4I, COX5A, COX5B, COX6A, COX6B, COX6C, COX7A, COX7B, COX7C, COX8 and NDUFA4, which are encoded in the nuclear genome. The complex exists as a monomer or a dimer and forms supercomplexes (SCs) in the inner mitochondrial membrane with NADH-ubiquinone oxidoreductase (complex I, CI) and ubiquinol-cytochrome c oxidoreductase (cytochrome b-c1 complex, complex III, CIII), resulting in different assemblies (supercomplex SCI(1)III(2)IV(1) and megacomplex MCI(2)III(2)IV(2)).

The protein resides in the mitochondrion inner membrane. The catalysed reaction is 4 Fe(II)-[cytochrome c] + O2 + 8 H(+)(in) = 4 Fe(III)-[cytochrome c] + 2 H2O + 4 H(+)(out). Component of the cytochrome c oxidase, the last enzyme in the mitochondrial electron transport chain which drives oxidative phosphorylation. The respiratory chain contains 3 multisubunit complexes succinate dehydrogenase (complex II, CII), ubiquinol-cytochrome c oxidoreductase (cytochrome b-c1 complex, complex III, CIII) and cytochrome c oxidase (complex IV, CIV), that cooperate to transfer electrons derived from NADH and succinate to molecular oxygen, creating an electrochemical gradient over the inner membrane that drives transmembrane transport and the ATP synthase. Cytochrome c oxidase is the component of the respiratory chain that catalyzes the reduction of oxygen to water. Electrons originating from reduced cytochrome c in the intermembrane space (IMS) are transferred via the dinuclear copper A center (CU(A)) of subunit 2 and heme A of subunit 1 to the active site in subunit 1, a binuclear center (BNC) formed by heme A3 and copper B (CU(B)). The BNC reduces molecular oxygen to 2 water molecules using 4 electrons from cytochrome c in the IMS and 4 protons from the mitochondrial matrix. This chain is Cytochrome c oxidase subunit 3 (MT-CO3), found in Anas platyrhynchos (Mallard).